We begin with the raw amino-acid sequence, 242 residues long: Ubiquinone biosynthesis O-methyltransferase (242 aa).

The S-adenosyl-L-methionine site is built by Arg-36, Gly-56, Asp-77, and Met-130.

Belongs to the methyltransferase superfamily. UbiG/COQ3 family.

It catalyses the reaction a 3-demethylubiquinol + S-adenosyl-L-methionine = a ubiquinol + S-adenosyl-L-homocysteine + H(+). The catalysed reaction is a 3-(all-trans-polyprenyl)benzene-1,2-diol + S-adenosyl-L-methionine = a 2-methoxy-6-(all-trans-polyprenyl)phenol + S-adenosyl-L-homocysteine + H(+). The protein operates within cofactor biosynthesis; ubiquinone biosynthesis. Functionally, O-methyltransferase that catalyzes the 2 O-methylation steps in the ubiquinone biosynthetic pathway. The sequence is that of Ubiquinone biosynthesis O-methyltransferase from Pasteurella multocida (strain Pm70).